A 458-amino-acid polypeptide reads, in one-letter code: Histone acetyltransferase Tip60 homolog (458 aa).

Positions 1 to 24 are disordered; the sequence is MTEPKKEIIEDENHGISKKIPTDP. A Tudor-knot domain is found at 30 to 86; that stretch reads VTEGCRLLVMMASQEEERWAEVISRCRAANGSIKFYVHYIDCNRRLDEWVQSDRLNL. The segment at 94 to 123 is disordered; that stretch reads KGGKKGAHLREENRDSNENEGKKSGRKRKI. A compositionally biased stretch (basic and acidic residues) spans 101–116; the sequence is HLREENRDSNENEGKK. An MYST-type HAT domain is found at 168-446; that stretch reads TRIRNVECIE…INPAALQWRP (279 aa). The C2HC MYST-type zinc finger occupies 201–226; the sequence is IYICEFCLKYLKSKTCLKRHMEKCAM. Lys-268 bears the N6-acetyllysine; by autocatalysis mark. Residues 311-313 and 318-324 each bind acetyl-CoA; these read ILV and QKKGYGS. Catalysis depends on Glu-344, which acts as the Proton donor/acceptor. Residues Ser-348 and Ser-357 each contribute to the acetyl-CoA site.

It belongs to the MYST (SAS/MOZ) family. In terms of assembly, interacts with transcription-associated protein trr-1. Probably a component of a complex with histone acetyltransferase (HAT) activity, at least composed of mys-1 and trr-1. In terms of processing, autoacetylation at Lys-268 is required for binding histones with high affinity and for proper function.

It is found in the nucleus. The catalysed reaction is L-lysyl-[protein] + acetyl-CoA = N(6)-acetyl-L-lysyl-[protein] + CoA + H(+). In terms of biological role, probable catalytic subunit of the Tip60 chromatin-remodeling complex. Plays a role in acetylation of nucleosomal histone H4 and perhaps also H2A, probably acting as a component of the Tip60 histone acetyltransferase complex. Acts in the determination of vulval and distal tip cell (DTC) precursor cell fates. Involved in the positive regulation of transcription factor daf-16, probably acting by histone acetylation; thereby modulating stress resistance. In Caenorhabditis elegans, this protein is Histone acetyltransferase Tip60 homolog.